Here is a 203-residue protein sequence, read N- to C-terminus: Hydra actinoporin-like toxin 2 (203 aa).

Positions 1 to 21 (MLSYLCFGCFLVSASLEIACG) are cleaved as a signal peptide. The short motif at 175–177 (RGG) is the Cell attachment site element.

It belongs to the actinoporin family. HALT subfamily. As to quaternary structure, octamer or nonamer in membranes. Monomer in the soluble state. In vitro, interacts with folate receptor alpha (of target organism). As to expression, strongly expressed in the gland and mucous cells in the endoderm.

Its subcellular location is the nematocyst. It is found in the secreted. The protein resides in the target cell membrane. Its function is as follows. Pore-forming protein that forms hydrophilic pores and causes cytolysis. Compared to equinatoxin-2 (AC P61914), it reveals lower cytolysis activity (5-12-fold difference, tested on erythrocytes), a larger pore size (probably 2-3 nm) and different affinity to membrane lipids (100-fold lower affinity to sphingomyelin). Binds to sulfatides (SFT). Shows cytolytic activity on HeLa cells, with a different potency than its paralogs (from most potent to less potent: HALT-4&gt;HALT-6~HALT-1&gt;HALT-3&gt;HALT-7&gt;HALT-2). Pore formation is a multi-step process that involves specific recognition of membrane lipid by a protein aromatic residues rich region, firm binding to the membrane (mainly driven by hydrophobic interactions) accompanied by the transfer of the N-terminal region to the lipid-water interface and finally pore formation after oligomerization of monomers. In vitro, binds to the folate receptor alpha (FOLR1), a GPI-anchored membrane protein that plays a major role in the uptake of folate/folic acid into cells via endocytosis, suggesting a possible involvement of this receptor in the mechanism of HALT-1-induced cell lysis. In vivo, does not cause visible paralysis in larvae of the blowfly Sarcophaga faculata, the most common arthropod prey of Hydra. In Hydra vulgaris (Hydra), this protein is Hydra actinoporin-like toxin 2.